The chain runs to 518 residues: Sensor protein kinase HptS (518 aa).

The next 2 membrane-spanning stretches (helical) occupy residues 20–40 (IFPV…IYIW) and 222–242 (GITL…FGFI). The 217-residue stretch at 297–513 (EQLIHSIEHT…LICYKIPLSR (217 aa)) folds into the Histidine kinase domain. At His-325 the chain carries Phosphohistidine; by autocatalysis.

Post-translationally, autophosphorylated.

Its subcellular location is the cell membrane. The enzyme catalyses ATP + protein L-histidine = ADP + protein N-phospho-L-histidine.. In terms of biological role, member of the two-component regulatory system HptS/HptR that regulates genes involved in hexose phosphate transport system in response to changes in extracellular phosphate sources. May act as a sensor protein kinase which is autophosphorylated at a histidine residue and transfers its phosphate group to the conserved aspartic acid residue in the regulatory domain of HptS. In turn, HptS antagonizes CcpA-dependent transcription of a subset of CcpA-regulated genes involved in antibiotic susceptibility. The chain is Sensor protein kinase HptS (hptS) from Staphylococcus aureus (strain MRSA252).